The primary structure comprises 423 residues: DUF21 domain-containing protein At2g14520 (423 aa).

The Extracellular portion of the chain corresponds to 1–11 (MAVEYECCGTS). Residues 8–191 (CGTSFFIHIA…GKGGELTHDE (184 aa)) form the CNNM transmembrane domain. Residues 12-32 (FFIHIAVIVLLVLFAGLMSGL) traverse the membrane as a helical segment. At 33 to 70 (TLGLMSMSLVDLEVLAKSGTPRDRIHAAKILPVVKNQH) the chain is on the cytoplasmic side. Residues 71–91 (LLLCTLLICNAAAMEALPIFL) traverse the membrane as a helical segment. Residues 92–94 (DAL) are Extracellular-facing. A helical membrane pass occupies residues 95–115 (VTAWGAILISVTLILLFGEII). The Cytoplasmic segment spans residues 116–136 (PQSVCSRHGLAIGATVAPFVR). The helical transmembrane segment at 137–157 (VLVWICLPVAWPISKLLDFLL) threads the bilayer. At 158–423 (GHGRVALFRR…DETDHHFEDL (266 aa)) the chain is on the extracellular side. In terms of domain architecture, CBS 1 spans 210–271 (MTPISDTFVI…TINPDEEIQV (62 aa)). N-linked (GlcNAc...) asparagine glycosylation is found at Asn-273 and Asn-322. 2 consecutive CBS domains span residues 275 to 332 (TIRR…RVDV) and 356 to 415 (PNRA…IFDE).

The protein resides in the membrane. The chain is DUF21 domain-containing protein At2g14520 (CBSDUF3) from Arabidopsis thaliana (Mouse-ear cress).